The following is a 74-amino-acid chain: Lambda-hexatoxin-Hv1e (74 aa).

A signal peptide spans 1–22; that stretch reads MNTATCFIVLLVVATVIGGIEA. Residues 23-35 constitute a propeptide that is removed on maturation; it reads GEFDMRKDVMGLF. Cystine bridges form between Cys40-Cys54, Cys47-Cys59, Cys50-Cys51, and Cys53-Cys69.

This sequence belongs to the neurotoxin 11 (kappa toxin) family. In terms of tissue distribution, expressed by the venom gland.

The protein resides in the secreted. Functionally, this excitatory toxin inhibits insect calcium-activated potassium (KCa) channels (Slo-type). The protein is Lambda-hexatoxin-Hv1e of Hadronyche versuta (Blue mountains funnel-web spider).